A 445-amino-acid polypeptide reads, in one-letter code: Phosphoglucosamine mutase (445 aa).

Serine 102 functions as the Phosphoserine intermediate in the catalytic mechanism. The Mg(2+) site is built by serine 102, aspartate 241, aspartate 243, and aspartate 245. Serine 102 carries the post-translational modification Phosphoserine.

This sequence belongs to the phosphohexose mutase family. Mg(2+) is required as a cofactor. In terms of processing, activated by phosphorylation.

The catalysed reaction is alpha-D-glucosamine 1-phosphate = D-glucosamine 6-phosphate. In terms of biological role, catalyzes the conversion of glucosamine-6-phosphate to glucosamine-1-phosphate. This Haemophilus influenzae (strain PittEE) protein is Phosphoglucosamine mutase.